A 140-amino-acid chain; its full sequence is Ribosome-binding factor A (140 aa).

Basic residues predominate over residues 1–13 (MQKKSSSKSHRAT). Positions 1–22 (MQKKSSSKSHRATRGPSQRQLR) are disordered.

Belongs to the RbfA family. As to quaternary structure, monomer. Binds 30S ribosomal subunits, but not 50S ribosomal subunits or 70S ribosomes.

Its subcellular location is the cytoplasm. In terms of biological role, one of several proteins that assist in the late maturation steps of the functional core of the 30S ribosomal subunit. Associates with free 30S ribosomal subunits (but not with 30S subunits that are part of 70S ribosomes or polysomes). Required for efficient processing of 16S rRNA. May interact with the 5'-terminal helix region of 16S rRNA. The sequence is that of Ribosome-binding factor A from Parvibaculum lavamentivorans (strain DS-1 / DSM 13023 / NCIMB 13966).